A 165-amino-acid polypeptide reads, in one-letter code: Protein SEED AND ROOT HAIR PROTECTIVE PROTEIN (165 aa).

A signal peptide spans 1 to 24 (MAFSRLSFAASLIVFSSLIISSVA).

Belongs to the plant proline-rich protein superfamily. As to expression, root hair and seed specific expression. Also observed in other tissues including siliques, roots and flowers.

Its subcellular location is the secreted. The protein resides in the cell wall. Its function is as follows. Contributes to cell wall structure in root hairs and seeds, especially in phosphate (Pi) deprivation conditions or in the presence of ethylene. Particularly important in maternal tissues (pericarps and seed coats) during seed development, especially under stress conditions. Confers thermotolerance in seed germination rate. The polypeptide is Protein SEED AND ROOT HAIR PROTECTIVE PROTEIN (Arabidopsis thaliana (Mouse-ear cress)).